A 311-amino-acid chain; its full sequence is MTMRVTFLGTSGAVPTTQRNTSSIFVNRDGDYLLFDCGEGTQRQMMRYGTGFAIDHLFVTHLHGDHVLGIPGLLQTWDFNERERAIAIHTPAGTRGNIKQLIQANGTTPSFPVRINEVSAGDVVLDRSEYEIRAIETAHRCASVGYVLDEDDRKGKFDREKAEEEFGIPPGPKYSKLHRGEAVEHEGETIQPEAVVGPARPGRRFVYTGDTLPTESVIEASEDADLLVHDATFAEDRKERAKATAHSTAREAADVARQAGASTLALTHISTRYAASADELVDEARDAFDGEVVLAEDGMERRVEFPDADEY.

Zn(2+)-binding residues include His61, His63, Asp65, His66, His139, Asp210, and His268. The active-site Proton acceptor is Asp65.

Belongs to the RNase Z family. In terms of assembly, homodimer. It depends on Zn(2+) as a cofactor.

The catalysed reaction is Endonucleolytic cleavage of RNA, removing extra 3' nucleotides from tRNA precursor, generating 3' termini of tRNAs. A 3'-hydroxy group is left at the tRNA terminus and a 5'-phosphoryl group is left at the trailer molecule.. Its function is as follows. Zinc phosphodiesterase, which displays some tRNA 3'-processing endonuclease activity. Probably involved in tRNA maturation, by removing a 3'-trailer from precursor tRNA. In Haloarcula marismortui (strain ATCC 43049 / DSM 3752 / JCM 8966 / VKM B-1809) (Halobacterium marismortui), this protein is Ribonuclease Z.